Here is a 695-residue protein sequence, read N- to C-terminus: Putative pentatricopeptide repeat-containing protein At1g77010, mitochondrial (695 aa).

Residues 1 to 64 (MILKYNSSYR…KGFLSSIVIV (64 aa)) constitute a mitochondrion transit peptide. 17 PPR repeats span residues 61–91 (IVIV…MPDR), 92–122 (NYFS…MPER), 123–157 (DGYS…DVVT), 159–184 (NSLL…LNFS), 186–220 (DAIT…GVEC), 221–251 (DSKM…IREP), 252–282 (DDHS…KSNR), 283–313 (CVIL…MRNE), 317–351 (DSRT…GLID), 352–382 (DIVV…VESY), 383–417 (DTIL…SLIS), 418–448 (WNSM…DLPT), 449–483 (DEVS…GLDS), 484–514 (DQVV…MVKS), 515–549 (DEVP…GIRP), 550–585 (TQIT…GFVP), and 586–616 (DKEH…MPFD). The segment at 621–695 (MWSSILRGCV…KNPGSSWTDC (75 aa)) is type E motif; degenerate.

It belongs to the PPR family. PCMP-E subfamily.

Its subcellular location is the mitochondrion. This Arabidopsis thaliana (Mouse-ear cress) protein is Putative pentatricopeptide repeat-containing protein At1g77010, mitochondrial (PCMP-E5).